Here is a 941-residue protein sequence, read N- to C-terminus: Peroxisomal ATPase PEX6 (941 aa).

ATP-binding positions include 384–391 and 698–705; these read GIPGCGKR and GPPGTGKT.

The protein belongs to the AAA ATPase family. As to quaternary structure, interacts with PEX1; forming the PEX1-PEX6 AAA ATPase complex, which is composed of a heterohexamer formed by a trimer of PEX1-PEX6 dimers. Interacts with APME9.

The protein localises to the cytoplasm. It is found in the cytosol. The protein resides in the peroxisome membrane. The catalysed reaction is ATP + H2O = ADP + phosphate + H(+). Its function is as follows. Component of the PEX1-PEX6 AAA ATPase complex, a protein dislocase complex that mediates the ATP-dependent extraction of the PEX5 receptor from peroxisomal membranes, an essential step for PEX5 recycling. Specifically recognizes PEX5 monoubiquitinated at 'Cys-11', and pulls it out of the peroxisome lumen through the PEX2-PEX10-PEX12 retrotranslocation channel. Extraction by the PEX1-PEX6 AAA ATPase complex is accompanied by unfolding of the TPR repeats and release of bound cargo from PEX5. Required for jasmonate biosynthesis. Necessary for the developmental elimination of obsolete peroxisome matix proteins. This is Peroxisomal ATPase PEX6 from Arabidopsis thaliana (Mouse-ear cress).